Consider the following 349-residue polypeptide: MKLSKFKFNLPSELIALHPAKNRDESRLMVVHRDTGEIEHREFKDILDYYGKGDVFIFNNTKVFPARLYGNKEKTGARIEVFLLRELNEDLRLWDVLVDPARKIRIGNKLYFGEDDSMVAEVIDNTTSRGRTLRFLYDGNHDEFKKALYALGETPLPKYIEREVEPEDEDRYQNIFAAEEGAVVAPAAGLHFSRELMKRLEIKDCQFAFLTLHSGLGNFREIDVEDLTKHKMDSEQMVVNADVVDIVNKGKDEGHKVCAVGTSVMRAIETAVSTDGHLKEFEGWTNKFIFPPYDFSVATSMVTNFHMPLSTLLMMTASFGGYELIMDAYDIALKEKYRFGAYGDAMLIL.

This sequence belongs to the QueA family. Monomer.

Its subcellular location is the cytoplasm. It catalyses the reaction 7-aminomethyl-7-carbaguanosine(34) in tRNA + S-adenosyl-L-methionine = epoxyqueuosine(34) in tRNA + adenine + L-methionine + 2 H(+). It functions in the pathway tRNA modification; tRNA-queuosine biosynthesis. Its function is as follows. Transfers and isomerizes the ribose moiety from AdoMet to the 7-aminomethyl group of 7-deazaguanine (preQ1-tRNA) to give epoxyqueuosine (oQ-tRNA). This Parabacteroides distasonis (strain ATCC 8503 / DSM 20701 / CIP 104284 / JCM 5825 / NCTC 11152) protein is S-adenosylmethionine:tRNA ribosyltransferase-isomerase.